Reading from the N-terminus, the 261-residue chain is Acyl-[acyl-carrier-protein]--UDP-N-acetylglucosamine O-acyltransferase (261 aa).

The protein belongs to the transferase hexapeptide repeat family. LpxA subfamily. Homotrimer.

It localises to the cytoplasm. The enzyme catalyses a (3R)-hydroxyacyl-[ACP] + UDP-N-acetyl-alpha-D-glucosamine = a UDP-3-O-[(3R)-3-hydroxyacyl]-N-acetyl-alpha-D-glucosamine + holo-[ACP]. Its pathway is glycolipid biosynthesis; lipid IV(A) biosynthesis; lipid IV(A) from (3R)-3-hydroxytetradecanoyl-[acyl-carrier-protein] and UDP-N-acetyl-alpha-D-glucosamine: step 1/6. Functionally, involved in the biosynthesis of lipid A, a phosphorylated glycolipid that anchors the lipopolysaccharide to the outer membrane of the cell. This chain is Acyl-[acyl-carrier-protein]--UDP-N-acetylglucosamine O-acyltransferase, found in Trichlorobacter lovleyi (strain ATCC BAA-1151 / DSM 17278 / SZ) (Geobacter lovleyi).